The sequence spans 437 residues: GTPase Der (437 aa).

EngA-type G domains follow at residues 3-167 (NLVA…NKET) and 176-352 (PRFA…ENRT). GTP is bound by residues 9–16 (GRPNVGKS), 56–60 (DTGGW), 119–122 (NKTD), 182–189 (GRPNAGKS), 229–233 (DTAGI), and 294–297 (NKWD). Residues 353-437 (TKIPTARLNE…TPINIYIRQK (85 aa)) enclose the KH-like domain.

This sequence belongs to the TRAFAC class TrmE-Era-EngA-EngB-Septin-like GTPase superfamily. EngA (Der) GTPase family. Associates with the 50S ribosomal subunit.

GTPase that plays an essential role in the late steps of ribosome biogenesis. The polypeptide is GTPase Der (Bacteroides thetaiotaomicron (strain ATCC 29148 / DSM 2079 / JCM 5827 / CCUG 10774 / NCTC 10582 / VPI-5482 / E50)).